Reading from the N-terminus, the 507-residue chain is Dolichyl pyrophosphate Man9GlcNAc2 alpha-1,3-glucosyltransferase (507 aa).

Residues 1-2 (ME) lie on the Cytoplasmic side of the membrane. A helical membrane pass occupies residues 3–23 (SWPWMAVVVLLGLTVRWTVSL). Topologically, residues 24–114 (SSYSGAGKPP…SQAHKLFMRA (91 aa)) are lumenal. A glycan (N-linked (GlcNAc...) asparagine) is linked at asparagine 59. A helical transmembrane segment spans residues 115-135 (TVLAADLLIYVPAVLLYCYSL). The Cytoplasmic segment spans residues 136-143 (KEISPKRK). The helical transmembrane segment at 144 to 164 (IASALCILLYPGLILIDYGHF) threads the bilayer. Topologically, residues 165-172 (QYNSVSLG) are lumenal. A helical transmembrane segment spans residues 173–193 (FALWGVLGVSWDWDLLGSLAF). Residues 194–229 (CLALNYKQMELYHSLPFFCFLLGKCFKKGLKGKGLA) are Cytoplasmic-facing. The chain crosses the membrane as a helical span at residues 230–250 (LFIRIACTVLASFLLCWLPFL). Residues 251–297 (TEREHALQVVRRLFPVDRGLFEDKVANIWCSVNVFLKIKDTLPRHIQ) lie on the Lumenal side of the membrane. The chain crosses the membrane as a helical span at residues 298 to 318 (IAISFCFTLLSLLPACIKLTV). Topologically, residues 319 to 332 (RPSCKGFRFTLVSC) are cytoplasmic. Residues 333-353 (ALSFFLFSFQVHEKSILLVSL) traverse the membrane as a helical segment. The Lumenal portion of the chain corresponds to 354–361 (PVCLVLTE). A helical membrane pass occupies residues 362–382 (IPFMSTWFLLVSTFSMLPLLL). The Cytoplasmic portion of the chain corresponds to 383–385 (KDE). Residues 386–406 (LLLPSVVTVMAFVIACGTFFP) form a helical membrane-spanning segment. At 407–437 (MLENTSEEQLQLKSFAVSVRRHLPGFTFLPR) the chain is on the lumenal side. Residues 438–458 (IMQCLFLSSVITMVLLTILSV) traverse the membrane as a helical segment. Over 459–468 (TLDPPQKLPD) the chain is Cytoplasmic. Residues 469-489 (LFPVLICFVSCVNFVFFLVYF) form a helical membrane-spanning segment. Over 490–507 (NIVIMWDSKNGRNRKKIE) the chain is Lumenal.

It belongs to the ALG6/ALG8 glucosyltransferase family.

It localises to the endoplasmic reticulum membrane. The enzyme catalyses an alpha-D-Man-(1-&gt;2)-alpha-D-Man-(1-&gt;2)-alpha-D-Man-(1-&gt;3)-[alpha-D-Man-(1-&gt;2)-alpha-D-Man-(1-&gt;3)-[alpha-D-Man-(1-&gt;2)-alpha-D-Man-(1-&gt;6)]-alpha-D-Man-(1-&gt;6)]-beta-D-Man-(1-&gt;4)-beta-D-GlcNAc-(1-&gt;4)-alpha-D-GlcNAc-diphospho-di-trans,poly-cis-dolichol + a di-trans,poly-cis-dolichyl beta-D-glucosyl phosphate = an alpha-D-Glc-(1-&gt;3)-alpha-D-Man-(1-&gt;2)-alpha-D-Man-(1-&gt;2)-alpha-D-Man-(1-&gt;3)-[alpha-D-Man-(1-&gt;2)-alpha-D-Man-(1-&gt;3)-[alpha-D-Man-(1-&gt;2)-alpha-D-Man-(1-&gt;6)]-alpha-D-Man-(1-&gt;6)]-beta-D-Man-(1-&gt;4)-beta-D-GlcNAc-(1-&gt;4)-alpha-D-GlcNAc-diphospho-di-trans,poly-cis-dolichol + a di-trans,poly-cis-dolichyl phosphate + H(+). Its pathway is protein modification; protein glycosylation. In terms of biological role, dolichyl pyrophosphate Man9GlcNAc2 alpha-1,3-glucosyltransferase that operates in the biosynthetic pathway of dolichol-linked oligosaccharides, the glycan precursors employed in protein asparagine (N)-glycosylation. The assembly of dolichol-linked oligosaccharides begins on the cytosolic side of the endoplasmic reticulum membrane and finishes in its lumen. The sequential addition of sugars to dolichol pyrophosphate produces dolichol-linked oligosaccharides containing fourteen sugars, including two GlcNAcs, nine mannoses and three glucoses. Once assembled, the oligosaccharide is transferred from the lipid to nascent proteins by oligosaccharyltransferases. In the lumen of the endoplasmic reticulum, adds the first glucose residue from dolichyl phosphate glucose (Dol-P-Glc) onto the lipid-linked oligosaccharide intermediate Man(9)GlcNAc(2)-PP-Dol to produce Glc(1)Man(9)GlcNAc(2)-PP-Dol. Glc(1)Man(9)GlcNAc(2)-PP-Dol is a substrate for ALG8, the following enzyme in the biosynthetic pathway. The chain is Dolichyl pyrophosphate Man9GlcNAc2 alpha-1,3-glucosyltransferase from Mus musculus (Mouse).